An 838-amino-acid polypeptide reads, in one-letter code: Tuftelin-interacting protein 11 (838 aa).

Positions 1–13 (MSLSHLYRDGEGH) are enriched in basic and acidic residues. Residues 1 to 51 (MSLSHLYRDGEGHLDDDDDDERENFEITDWDLQNEFNPNRQRHWQTKEEAT) are required for interaction with DHX15. 2 disordered regions span residues 1-74 (MSLS…RARD) and 86-137 (LKKG…SGGT). Position 2 is a phosphoserine (Ser-2). The segment covering 14–29 (LDDDDDDERENFEITD) has biased composition (acidic residues). Positions 45–65 (QTKEEATYGVWAERDSDEERP) are enriched in basic and acidic residues. Phosphoserine is present on residues Ser-60, Ser-96, and Ser-99. The span at 92 to 101 (EEADSEDSDA) shows a compositional bias: acidic residues. A compositionally biased stretch (basic and acidic residues) spans 102–117 (EEKPVKQEDFPKDLGP). Ser-145 is subject to Phosphoserine. The region spanning 150–196 (TKGIGQKLLQKMGYVPGRGLGKNAQGIINPIEAKQRKGKGAVGAYGS) is the G-patch domain. Residues 193–237 (AYGSERTTQSLQDFPVADSEEEAEEEFQKELSQWRKDPSGSKKKP) are disordered. A Phosphoserine modification is found at Ser-211. Positions 218 to 232 (EFQKELSQWRKDPSG) are enriched in basic and acidic residues. Positions 701–706 (VKDKFN) match the Nuclear localization signal motif. The interval 711–735 (IMNRAVSSNVGAYMQPGARENIAYL) is required for nuclear speckle localization.

It belongs to the TFP11/STIP family. In terms of assembly, identified in the spliceosome C complex. Found in the Intron Large (IL) complex, a post-mRNA release spliceosomal complex containing the excised intron, U2, U5 and U6 snRNPs, and splicing factors. Interacts with TUFT1. Interacts with DHX15; indicative for a recruitment of DHX15 to the IL complex. Interacts with GCFC2. Widely expressed. In tooth it is expressed in ameloblasts and odontoblasts.

It localises to the cytoplasm. Its subcellular location is the nucleus. In terms of biological role, involved in pre-mRNA splicing, specifically in spliceosome disassembly during late-stage splicing events. Intron turnover seems to proceed through reactions in two lariat-intron associated complexes termed Intron Large (IL) and Intron Small (IS). In cooperation with DHX15 seems to mediate the transition of the U2, U5 and U6 snRNP-containing IL complex to the snRNP-free IS complex leading to efficient debranching and turnover of excised introns. May play a role in the differentiation of ameloblasts and odontoblasts or in the forming of the enamel extracellular matrix. This is Tuftelin-interacting protein 11 (Tfip11) from Mus musculus (Mouse).